A 352-amino-acid polypeptide reads, in one-letter code: Protein Wnt-3a (352 aa).

The N-terminal stretch at 1–18 is a signal peptide; that stretch reads MGCFGYLLLIIGLHQVLA. Intrachain disulfides connect cysteine 77-cysteine 88, cysteine 128-cysteine 136, cysteine 138-cysteine 155, cysteine 203-cysteine 217, cysteine 205-cysteine 212, cysteine 297-cysteine 312, cysteine 327-cysteine 342, cysteine 329-cysteine 339, and cysteine 334-cysteine 335. N-linked (GlcNAc...) asparagine glycosylation occurs at asparagine 87. Serine 209 carries O-palmitoleoyl serine lipidation. Asparagine 298 carries N-linked (GlcNAc...) asparagine glycosylation.

Belongs to the Wnt family. Disulfide bonds have critical and distinct roles in secretion and activity. Loss of each conserved cysteine results in high molecular weight oxidized Wnt oligomers, which are formed through inter-Wnt disulfide bonding. Post-translationally, palmitoleoylation is required for efficient binding to frizzled receptors. Depalmitoleoylation leads to Wnt signaling pathway inhibition. As to expression, at neurula in anterior neural fold; at tailbud in dorsal midline of midbrain.

It is found in the secreted. The protein localises to the extracellular space. The protein resides in the extracellular matrix. Ligand for members of the frizzled family of seven transmembrane receptors. Functions in the canonical Wnt signaling pathway that results in activation of transcription factors of the TCF/LEF family. Required for normal embryonic mesoderm development and formation of caudal somites. Required for normal morphogenesis of the developing neural tube. The protein is Protein Wnt-3a (wnt3a) of Xenopus laevis (African clawed frog).